We begin with the raw amino-acid sequence, 179 residues long: MKFFIFTCLVAAALAKHAVKDKPSSEESASVYLGKYKQGNSVFFQTPQDSASSSSSEESSEEISEKIEQSEEQKVNLNQQKKSKQFSQDSSFPQICTPYQQQSSVNQRPQPNAIYDVPSQESTSTSVEEILKKIIDIVKYFQYQQLTNPHFPQAVHPQIRVSSWAPSKDYTFPTARYMA.

The first 15 residues, 1–15 (MKFFIFTCLVAAALA), serve as a signal peptide directing secretion. A phosphoserine mark is found at Ser24 and Ser25. Residues 44 to 121 (FQTPQDSASS…NAIYDVPSQE (78 aa)) form a disordered region. The segment covering 63–74 (ISEKIEQSEEQK) has biased composition (basic and acidic residues). The span at 93–110 (PQICTPYQQQSSVNQRPQ) shows a compositional bias: polar residues.

Belongs to the alpha-casein family. In terms of tissue distribution, mammary gland specific. Secreted in milk.

The protein resides in the secreted. Functionally, important role in the capacity of milk to transport calcium phosphate. In Rattus norvegicus (Rat), this protein is Alpha-S2-casein-like A (Csn1s2a).